The following is a 327-amino-acid chain: MRSRSNLIGLINFFTFLLSIPILGGGIWLSSRANSTDCLRFLQWPLIIIGISIMVISLAGIAGACYQNKFLMWLYLFTMFFVIAALIGFTIFAYVVTDKGSGRFVMNRRYLDYYLNDYSGWLKDRVTDNGYWRDIGSCVRDSGVCKKIGRDLNGVPETAHMFYFRNLSPVESGCCKPPTDCGYTYVNETVWIPGGEMVGPNPDCMLWNNDQRLLCYQCSSCKAGVLGSLKKSWRKVSVINIVVVIILVIFYVIACAAYQNVKRMYNDEPVGEARMTNLILVIFKFKEILVQFFFGIVFLLLFNGLMVCCCNDKFAFSVFFFGYVTYA.

Over 1 to 6 (MRSRSN) the chain is Cytoplasmic. A helical membrane pass occupies residues 7–27 (LIGLINFFTFLLSIPILGGGI). Topologically, residues 28–43 (WLSSRANSTDCLRFLQ) are extracellular. N-linked (GlcNAc...) asparagine glycosylation is present at Asn34. A helical membrane pass occupies residues 44 to 64 (WPLIIIGISIMVISLAGIAGA). Over 65–75 (CYQNKFLMWLY) the chain is Cytoplasmic. The chain crosses the membrane as a helical span at residues 76-96 (LFTMFFVIAALIGFTIFAYVV). Residues 97-235 (TDKGSGRFVM…LGSLKKSWRK (139 aa)) lie on the Extracellular side of the membrane. Asn187 carries an N-linked (GlcNAc...) asparagine glycan. A helical transmembrane segment spans residues 236–256 (VSVINIVVVIILVIFYVIACA). Over 257-287 (AYQNVKRMYNDEPVGEARMTNLILVIFKFKE) the chain is Cytoplasmic. The chain crosses the membrane as a helical span at residues 288–308 (ILVQFFFGIVFLLLFNGLMVC). Topologically, residues 309–327 (CCNDKFAFSVFFFGYVTYA) are extracellular.

It belongs to the tetraspanin (TM4SF) family.

The protein resides in the membrane. Its function is as follows. May be involved in the regulation of cell differentiation. The chain is Tetraspanin-4 (TET4) from Arabidopsis thaliana (Mouse-ear cress).